The following is a 350-amino-acid chain: Protein RecA (350 aa).

67–74 (GPESSGKT) is a binding site for ATP.

This sequence belongs to the RecA family.

The protein localises to the cytoplasm. In terms of biological role, can catalyze the hydrolysis of ATP in the presence of single-stranded DNA, the ATP-dependent uptake of single-stranded DNA by duplex DNA, and the ATP-dependent hybridization of homologous single-stranded DNAs. It interacts with LexA causing its activation and leading to its autocatalytic cleavage. This chain is Protein RecA, found in Chlamydia caviae (strain ATCC VR-813 / DSM 19441 / 03DC25 / GPIC) (Chlamydophila caviae).